We begin with the raw amino-acid sequence, 270 residues long: 3-methyl-2-oxobutanoate hydroxymethyltransferase (270 aa).

Mg(2+) contacts are provided by Asp43 and Asp82. 3-methyl-2-oxobutanoate is bound by residues 43–44 (DS), Asp82, and Lys112. Glu114 lines the Mg(2+) pocket. Catalysis depends on Glu179, which acts as the Proton acceptor.

Belongs to the PanB family. Homodecamer; pentamer of dimers. Mg(2+) serves as cofactor.

It is found in the cytoplasm. The catalysed reaction is 3-methyl-2-oxobutanoate + (6R)-5,10-methylene-5,6,7,8-tetrahydrofolate + H2O = 2-dehydropantoate + (6S)-5,6,7,8-tetrahydrofolate. It participates in cofactor biosynthesis; (R)-pantothenate biosynthesis; (R)-pantoate from 3-methyl-2-oxobutanoate: step 1/2. Its function is as follows. Catalyzes the reversible reaction in which hydroxymethyl group from 5,10-methylenetetrahydrofolate is transferred onto alpha-ketoisovalerate to form ketopantoate. The protein is 3-methyl-2-oxobutanoate hydroxymethyltransferase of Staphylococcus saprophyticus subsp. saprophyticus (strain ATCC 15305 / DSM 20229 / NCIMB 8711 / NCTC 7292 / S-41).